We begin with the raw amino-acid sequence, 399 residues long: Transcription factor UNE10 (399 aa).

Disordered stretches follow at residues 119-158 and 173-228; these read QSKPGGVGSTRVGSCSDGRTMGGGKRARVAPEWSGGGSQR and MGSH…RRDK. Over residues 178–201 the composition is skewed to basic and acidic residues; that stretch reads NTIDDHDSVCHSRPQMEDEEEKKA. The bHLH domain occupies 213–262; sequence RAAAIHNQSERKRRDKINQRMKTLQKLVPNSSKTDKASMLDEVIEYLKQL.

As to quaternary structure, homodimer. Associates to PTAC12/HMR/PAP5 which acts as a transcriptional coactivator. Interacts with the Pfr form of phyB but barely with that of phyA. Binds to COP1. Ubiquitinated and subsequently targeted to protein degradation by COP1 in the dark, but not in far-red light. As to expression, mainly expressed in stems, leaves, seedlings, fruits and flowers, and, to a lower extent, in roots.

Its subcellular location is the nucleus. Its activity is regulated as follows. Stabilized by phyA but destabilized by phyB. Accumulates in the dark but not in far-red light upon MG132 treatment, a 26S proteasome inhibitor (at protein level). Transcription factor binding to G-box elements (5'-CACGTG-3') in target genes promoters, particularly in far-red light but barely in the dark. Required during the fertilization of ovules by pollen. Repressor of phytochrome A-mediated far-red light responses including seed germination, suppression of hypocotyl elongation, and randomization of hypocotyl growth orientation. Does not inhibit phyB-induced red light responses. The chain is Transcription factor UNE10 from Arabidopsis thaliana (Mouse-ear cress).